The chain runs to 141 residues: Protein X (141 aa).

Over residues 24-48 (QSSGPPFPRPSAGSAASPASSLSAS) the composition is skewed to low complexity. Positions 24–51 (QSSGPPFPRPSAGSAASPASSLSASDES) are disordered. The segment at 68–113 (PCCLVVTCAELRTMDSTVNFVSWHANRQLGMPSKDLWTPYIRDQLL) is mitochondrial targeting sequence.

Belongs to the orthohepadnavirus protein X family. In terms of assembly, may form homodimer. May interact with host CEBPA, CFLAR, CREB1, DDB1, E4F1, HBXIP, HSPD1/HSP60, NFKBIA, POLR2E and SMAD4. Interacts with host SMC5-SMC6 complex and induces its degradation. Interacts with host TRPC4AP; leading to prevent ubiquitination of TRPC4AP. Interacts with host PLSCR1; this interaction promotes ubiquitination and degradation of HBx and impairs HBx-mediated cell proliferation. Post-translationally, a fraction may be phosphorylated in insect cells and HepG2 cells, a human hepatoblastoma cell line. Phosphorylated in vitro by host protein kinase C or mitogen-activated protein kinase. N-acetylated in insect cells.

The protein resides in the host cytoplasm. The protein localises to the host nucleus. Its subcellular location is the host mitochondrion. Multifunctional protein that plays a role in silencing host antiviral defenses and promoting viral transcription. Does not seem to be essential for HBV infection. May be directly involved in development of cirrhosis and liver cancer (hepatocellular carcinoma). Most of cytosolic activities involve modulation of cytosolic calcium. The effect on apoptosis is controversial depending on the cell types in which the studies have been conducted. May induce apoptosis by localizing in mitochondria and causing loss of mitochondrial membrane potential. May also modulate apoptosis by binding host CFLAR, a key regulator of the death-inducing signaling complex (DISC). Promotes viral transcription by using the host E3 ubiquitin ligase DDB1 to target the SMC5-SMC6 complex to proteasomal degradation. This host complex would otherwise bind to viral episomal DNA, and prevents its transcription. Moderately stimulates transcription of many different viral and cellular transcription elements. Promoters and enhancers stimulated by HBx contain DNA binding sites for NF-kappa-B, AP-1, AP-2, c-EBP, ATF/CREB, or the calcium-activated factor NF-AT. The sequence is that of Protein X from Woodchuck hepatitis B virus (isolate 1) (WHV).